We begin with the raw amino-acid sequence, 206 residues long: 2,3-bisphosphoglycerate-dependent phosphoglycerate mutase (206 aa).

Residues 9–16 (RHGQSEWN), 22–23 (TG), R61, 88–91 (ERDY), K99, 115–116 (RR), and 159–160 (GN) each bind substrate. Residue H10 is the Tele-phosphohistidine intermediate of the active site. The Proton donor/acceptor role is filled by E88.

This sequence belongs to the phosphoglycerate mutase family. BPG-dependent PGAM subfamily. In terms of assembly, homodimer.

The enzyme catalyses (2R)-2-phosphoglycerate = (2R)-3-phosphoglycerate. It participates in carbohydrate degradation; glycolysis; pyruvate from D-glyceraldehyde 3-phosphate: step 3/5. In terms of biological role, catalyzes the interconversion of 2-phosphoglycerate and 3-phosphoglycerate. This chain is 2,3-bisphosphoglycerate-dependent phosphoglycerate mutase, found in Brucella ovis (strain ATCC 25840 / 63/290 / NCTC 10512).